Reading from the N-terminus, the 564-residue chain is MMPPDIKPRSRDVTDGLEKAAARGMLRAVGMNDDDFAKAQIGVASSWNEITPCNLSLDRLAKAVKEGVFSAGGYPLEFGTISVSDGISMGHQGMHFSLVSREVIADSVETVMQAERLDGSVLLAGCDKSLPGMLMAAARLDLASVFLYAGSILPGRTKLSDGTEHEVTLIDAFEAVGACSRGLMPRADVDAIERAICPGEGACGGMYTANTMASAAEALGMSLPGSAAPPATDRRRDGFARRSGQAVIELLRRGITARDILTKEAFENAIAVVMAFGGSTNAILHLLAIAHEADVTLSLEDFSRIGFKVPHIADVKPFGRHVMFDVDHIGGVPVVMKALLDAGLLHGDCLTVTGQTMAENLASIAPPDPDGQVIRTLHNPIHPTGGITILRGSLAPDGAVVKTAGLDSDVFEGTARVFDGERAALDALKDGTIAKGDVVVIRYEGPKGGPGMREMLAITGAIKGAGLGKDVLLLTDGRFSGGTTGFCVGHIAPEAVEAGPIAFLRDGDRVLLDVVGCSLDVLVDPVEFSSRKKDFIPPAPRYTTGVLAKYVKLVSSATVGAVCG.

[2Fe-2S] cluster is bound at residue C53. Mg(2+) is bound at residue D85. C126 contributes to the [2Fe-2S] cluster binding site. Mg(2+) is bound by residues D127 and K128. K128 bears the N6-carboxylysine mark. C203 serves as a coordination point for [2Fe-2S] cluster. Residue E454 participates in Mg(2+) binding. S480 acts as the Proton acceptor in catalysis.

Belongs to the IlvD/Edd family. Homodimer. [2Fe-2S] cluster is required as a cofactor. Mg(2+) serves as cofactor.

It catalyses the reaction (2R)-2,3-dihydroxy-3-methylbutanoate = 3-methyl-2-oxobutanoate + H2O. It carries out the reaction (2R,3R)-2,3-dihydroxy-3-methylpentanoate = (S)-3-methyl-2-oxopentanoate + H2O. Its pathway is amino-acid biosynthesis; L-isoleucine biosynthesis; L-isoleucine from 2-oxobutanoate: step 3/4. It participates in amino-acid biosynthesis; L-valine biosynthesis; L-valine from pyruvate: step 3/4. Its function is as follows. Functions in the biosynthesis of branched-chain amino acids. Catalyzes the dehydration of (2R,3R)-2,3-dihydroxy-3-methylpentanoate (2,3-dihydroxy-3-methylvalerate) into 2-oxo-3-methylpentanoate (2-oxo-3-methylvalerate) and of (2R)-2,3-dihydroxy-3-methylbutanoate (2,3-dihydroxyisovalerate) into 2-oxo-3-methylbutanoate (2-oxoisovalerate), the penultimate precursor to L-isoleucine and L-valine, respectively. This Mycobacterium leprae (strain TN) protein is Dihydroxy-acid dehydratase.